The sequence spans 354 residues: Uroporphyrinogen decarboxylase (354 aa).

Substrate contacts are provided by residues 27-31 (RQAGR), aspartate 77, tyrosine 154, serine 209, and histidine 327.

The protein belongs to the uroporphyrinogen decarboxylase family. Homodimer.

The protein resides in the cytoplasm. The enzyme catalyses uroporphyrinogen III + 4 H(+) = coproporphyrinogen III + 4 CO2. The protein operates within porphyrin-containing compound metabolism; protoporphyrin-IX biosynthesis; coproporphyrinogen-III from 5-aminolevulinate: step 4/4. Functionally, catalyzes the decarboxylation of four acetate groups of uroporphyrinogen-III to yield coproporphyrinogen-III. This is Uroporphyrinogen decarboxylase from Saccharophagus degradans (strain 2-40 / ATCC 43961 / DSM 17024).